The sequence spans 1125 residues: Transcription-repair-coupling factor (1125 aa).

The Helicase ATP-binding domain maps to 597 to 758; sequence DMMSFKVMDR…LIKLRDISVL (162 aa). 610 to 617 provides a ligand contact to ATP; that stretch reads GDVGFGKT. The DEEQ box signature appears at 711–714; that stretch reads DEEQ. The Helicase C-terminal domain maps to 774–933; the sequence is SFSELLIKHA…GFKIAMKDME (160 aa).

The protein in the N-terminal section; belongs to the UvrB family. In the C-terminal section; belongs to the helicase family. RecG subfamily.

The protein resides in the cytoplasm. In terms of biological role, couples transcription and DNA repair by recognizing RNA polymerase (RNAP) stalled at DNA lesions. Mediates ATP-dependent release of RNAP and its truncated transcript from the DNA, and recruitment of nucleotide excision repair machinery to the damaged site. The polypeptide is Transcription-repair-coupling factor (Borreliella burgdorferi (strain ATCC 35210 / DSM 4680 / CIP 102532 / B31) (Borrelia burgdorferi)).